The sequence spans 486 residues: Glutamyl-tRNA(Gln) amidotransferase subunit A (486 aa).

Residues Lys74 and Ser149 each act as charge relay system in the active site. Residue Ser173 is the Acyl-ester intermediate of the active site.

It belongs to the amidase family. GatA subfamily. Heterotrimer of A, B and C subunits.

The enzyme catalyses L-glutamyl-tRNA(Gln) + L-glutamine + ATP + H2O = L-glutaminyl-tRNA(Gln) + L-glutamate + ADP + phosphate + H(+). In terms of biological role, allows the formation of correctly charged Gln-tRNA(Gln) through the transamidation of misacylated Glu-tRNA(Gln) in organisms which lack glutaminyl-tRNA synthetase. The reaction takes place in the presence of glutamine and ATP through an activated gamma-phospho-Glu-tRNA(Gln). This chain is Glutamyl-tRNA(Gln) amidotransferase subunit A, found in Prochlorococcus marinus (strain MIT 9313).